Consider the following 136-residue polypeptide: Protein NrdI (136 aa).

The protein belongs to the NrdI family.

Functionally, probably involved in ribonucleotide reductase function. The chain is Protein NrdI from Citrobacter koseri (strain ATCC BAA-895 / CDC 4225-83 / SGSC4696).